Reading from the N-terminus, the 326-residue chain is Polycomb complex protein BMI-1 (326 aa).

An RING-type zinc finger spans residues 18-57; the sequence is CVLCGGYFIDATTIIECLHSFCKTCIVRYLETSKYCPICD. A Nuclear localization signal motif is present at residues 81–95; sequence KLVPGLFKNEMKRRR. An interaction with PHC2 region spans residues 162–182; sequence RYLRCPAAMTVMHLRKFLRSK. The segment at 164–228 is interaction with E4F1; it reads LRCPAAMTVM…GPLPLKYRVR (65 aa). Positions 236–326 are disordered; sequence ISHQRDGLTN…VNGSSATSSG (91 aa). Composition is skewed to low complexity over residues 266 to 278, 290 to 303, and 315 to 326; these read PSTS…PSTP, SSTM…PSGN, and SSVNGSSATSSG.

As to quaternary structure, component of a PRC1-like complex. Identified in a PRC1-like HPRC-H complex with CBX2, CBX4, CBX8, PHC1, PHC2, PHC3 RING1 and RNF2. Interacts with RNF2/RING2. Interacts with RING1. Part of a complex that contains RNF2, UB2D3 and BMI1, where RNF2 and BMI1 form a tight heterodimer, and UB2D3 interacts only with RNF2. The complex composed of RNF2, UB2D3 and BMI1 binds nucleosomes, and has activity only with nucleosomal histone H2A. Interacts with CBX7 and CBX8. Interacts with SPOP. Part of a complex consisting of BMI1, CUL3 and SPOP. Interacts with E4F1. Interacts with PHC2. Interacts with zinc finger protein ZNF277. May be part of a complex including at least ZNF277, BMI1 and RNF2/RING2. Post-translationally, may be polyubiquitinated; which does not lead to proteasomal degradation. Monoubiquitinated.

The protein localises to the nucleus. Its subcellular location is the cytoplasm. Component of a Polycomb group (PcG) multiprotein PRC1-like complex, a complex class required to maintain the transcriptionally repressive state of many genes, including Hox genes, throughout development. PcG PRC1 complex acts via chromatin remodeling and modification of histones; it mediates monoubiquitination of histone H2A 'Lys-119', rendering chromatin heritably changed in its expressibility. The complex composed of RNF2, UB2D3 and BMI1 binds nucleosomes, and has activity only with nucleosomal histone H2A. In the PRC1-like complex, regulates the E3 ubiquitin-protein ligase activity of RNF2/RING2. This is Polycomb complex protein BMI-1 (BMI1) from Bos taurus (Bovine).